The following is a 275-amino-acid chain: Large ribosomal subunit protein uL2 (275 aa).

Residues 227-261 (PVDHPHGGGEAKSGQGNPHPVTPWGVPTKGYKTRK) form a disordered region.

The protein belongs to the universal ribosomal protein uL2 family. As to quaternary structure, part of the 50S ribosomal subunit. Forms a bridge to the 30S subunit in the 70S ribosome.

Functionally, one of the primary rRNA binding proteins. Required for association of the 30S and 50S subunits to form the 70S ribosome, for tRNA binding and peptide bond formation. It has been suggested to have peptidyltransferase activity; this is somewhat controversial. Makes several contacts with the 16S rRNA in the 70S ribosome. In Xylella fastidiosa (strain M23), this protein is Large ribosomal subunit protein uL2.